A 436-amino-acid chain; its full sequence is Retinoic acid receptor RXR (436 aa).

The disordered stretch occupies residues 1 to 108 (MDRSEGMDTL…GPSPSPGLPH (108 aa)). The interval 1–116 (MDRSEGMDTL…PHSSLHTKHI (116 aa)) is modulating. Residues 13–22 (SMPSGMSMGM) are compositionally biased toward low complexity. 2 stretches are compositionally biased toward polar residues: residues 40-49 (SSLTSPTSTH) and 62-76 (MASSTQPSPGPQQMH). Over residues 85–98 (SSMGSPPMLCLSPS) the composition is skewed to low complexity. 2 consecutive NR C4-type zinc fingers follow at residues 117 to 137 (CAICGDRASGKHYGVYSCEGC) and 153 to 172 (CRDDKNCMIDKRQRNRCQYC). A DNA-binding region (nuclear receptor) is located at residues 117 to 182 (CAICGDRASG…RYMKCLSMGM (66 aa)). Positions 183–206 (KREAVQEERQRVKEKGDGEVESTS) are hinge. Positions 189 to 200 (EERQRVKEKGDG) are enriched in basic and acidic residues. The tract at residues 189 to 209 (EERQRVKEKGDGEVESTSGAN) is disordered. In terms of domain architecture, NR LBD spans 209 to 432 (NNDMPVEQIL…TFLMEMLENP (224 aa)). Positions 290 and 301 each coordinate 9-cis-retinoate.

Belongs to the nuclear hormone receptor family. NR2 subfamily. As to quaternary structure, homodimer (via ligand-binding domain). Heterodimer. Homotetramer consisting of 2 canonical homodimers. Within the tetramer, each monomer binds one molecule of 9C-RA and a NCOA1-derived peptide containing an L-X(2)-L-L motif.

It is found in the nucleus. Its function is as follows. Ligand-dependent transcription factor probably involved in the retinoic acid response pathway. Binds 9-cis-retinoic acid (9C-RA) and, to a lesser extent, docosahexaenoic acid (DHA), phytanic acid, methoprene acid and oleic acid. Binds to double-stranded DNA sequences containing direct repeats (DR) with the consensus sequence 5'-[AG]GGTCA-3' and 1, 2, 3, 4 or 5 nucleotides in between (DR1, DR2, DR3. DR4 and DR5, respectively). Binding to DR1 is strongest. Transactivates gene expression when 9C-RA or DHA is bound. The sequence is that of Retinoic acid receptor RXR from Biomphalaria glabrata (Bloodfluke planorb).